An 890-amino-acid polypeptide reads, in one-letter code: Alanine--tRNA ligase (890 aa).

Residues histidine 573, histidine 577, cysteine 675, and histidine 679 each coordinate Zn(2+).

It belongs to the class-II aminoacyl-tRNA synthetase family. Zn(2+) is required as a cofactor.

It is found in the cytoplasm. The enzyme catalyses tRNA(Ala) + L-alanine + ATP = L-alanyl-tRNA(Ala) + AMP + diphosphate. Catalyzes the attachment of alanine to tRNA(Ala) in a two-step reaction: alanine is first activated by ATP to form Ala-AMP and then transferred to the acceptor end of tRNA(Ala). Also edits incorrectly charged Ser-tRNA(Ala) and Gly-tRNA(Ala) via its editing domain. This is Alanine--tRNA ligase from Streptomyces avermitilis (strain ATCC 31267 / DSM 46492 / JCM 5070 / NBRC 14893 / NCIMB 12804 / NRRL 8165 / MA-4680).